A 349-amino-acid polypeptide reads, in one-letter code: Isopentenyl-diphosphate delta-isomerase (349 aa).

Position 12-13 (12-13 (RK)) interacts with substrate. FMN contacts are provided by residues Ser-69, 70–72 (SMT), Ser-101, and Asn-129. 101–103 (SQR) provides a ligand contact to substrate. Position 164 (Gln-164) interacts with substrate. Mg(2+) is bound at residue Glu-165. Residues Lys-196, Thr-226, 279–281 (GIR), and 300–301 (AA) contribute to the FMN site.

Belongs to the IPP isomerase type 2 family. Homooctamer. Dimer of tetramers. Requires FMN as cofactor. The cofactor is NADPH. It depends on Mg(2+) as a cofactor.

The protein localises to the cytoplasm. The catalysed reaction is isopentenyl diphosphate = dimethylallyl diphosphate. Its function is as follows. Involved in the biosynthesis of isoprenoids. Catalyzes the 1,3-allylic rearrangement of the homoallylic substrate isopentenyl (IPP) to its allylic isomer, dimethylallyl diphosphate (DMAPP). The protein is Isopentenyl-diphosphate delta-isomerase of Paracoccus zeaxanthinifaciens.